The chain runs to 500 residues: Tyrosine decarboxylase 2 (500 aa).

Repeat copies occupy residues 65 to 122 (EDIR…TELE) and 125 to 176 (VLDW…GKRS). Positions 65 to 176 (EDIRQKIVPG…KFLNRFGKRS (112 aa)) are 2 X approximate tandem repeats. A substrate-binding site is contributed by serine 89. Pyridoxal 5'-phosphate-binding residues include alanine 153 and serine 154. Histidine 189 serves as a coordination point for substrate. Pyridoxal 5'-phosphate-binding residues include threonine 248 and asparagine 302. Position 305 is an N6-(pyridoxal phosphate)lysine (lysine 305).

The protein belongs to the group II decarboxylase family. It depends on pyridoxal 5'-phosphate as a cofactor. In terms of tissue distribution, mostly expressed in bulbs, and, to a lower extent, in stems, roots, leaves and flowers.

It catalyses the reaction L-tyrosine + H(+) = tyramine + CO2. It participates in alkaloid biosynthesis. Its function is as follows. Catalyzes the decarboxylation of L-tyrosine to tyramine, which is converted to norbelladine, a precursor to all Amaryllidaceae alkaloids such as galanthamine, lycorine and haemanthamine, and including haemanthamine- and crinamine-type alkaloids, promising anticancer agents. This is Tyrosine decarboxylase 2 from Narcissus pseudonarcissus (Daffodil).